Here is a 430-residue protein sequence, read N- to C-terminus: Adenylosuccinate synthetase (430 aa).

Residues G12–K18 and G40–T42 each bind GTP. The active-site Proton acceptor is the D13. Residues D13 and G40 each coordinate Mg(2+). Residues D13 to K16, N38 to H41, T129, R143, Q224, T239, and R303 contribute to the IMP site. The active-site Proton donor is H41. T299 to R305 contributes to the substrate binding site. GTP contacts are provided by residues R305, K331–D333, and S413–G415.

This sequence belongs to the adenylosuccinate synthetase family. As to quaternary structure, homodimer. Mg(2+) is required as a cofactor.

The protein resides in the cytoplasm. It carries out the reaction IMP + L-aspartate + GTP = N(6)-(1,2-dicarboxyethyl)-AMP + GDP + phosphate + 2 H(+). It functions in the pathway purine metabolism; AMP biosynthesis via de novo pathway; AMP from IMP: step 1/2. In terms of biological role, plays an important role in the de novo pathway of purine nucleotide biosynthesis. Catalyzes the first committed step in the biosynthesis of AMP from IMP. The protein is Adenylosuccinate synthetase of Ehrlichia chaffeensis (strain ATCC CRL-10679 / Arkansas).